Here is a 110-residue protein sequence, read N- to C-terminus: UPF0060 membrane protein Bcen_0802 (110 aa).

Transmembrane regions (helical) follow at residues 9 to 29 (ALFAATALAEIVGCYLPWLVL), 34 to 54 (PAWLLVPAALSLALFAWLLTL), 66 to 86 (YGGVYIAVALIWLRVVDGVAL), and 88 to 108 (RWDVAGAVLALGGMAVIALQP).

This sequence belongs to the UPF0060 family.

It localises to the cell inner membrane. This is UPF0060 membrane protein Bcen_0802 from Burkholderia orbicola (strain AU 1054).